The sequence spans 153 residues: MVVKAVCVINGDAKGTVFFEQESSETPVKVSGEVCGLAKGLHGFHVHEFGDNTNGCMSSGPHFNPYGKEHGAPVDENRHLGDLGNIEATGDCPTKVSITDSRITLFGADSIIGRTVVVHADADDLGKGGHELSKSTGNAGARIGCGVIGIAKV.

Cu cation-binding residues include His45, His47, and His62. Cys56 and Cys145 are disulfide-bonded. The Zn(2+) site is built by His62, His70, His79, and Asp82. A Cu cation-binding site is contributed by His119.

The protein belongs to the Cu-Zn superoxide dismutase family. In terms of assembly, homodimer. The cofactor is Cu cation. Zn(2+) serves as cofactor.

It is found in the cytoplasm. The catalysed reaction is 2 superoxide + 2 H(+) = H2O2 + O2. In terms of biological role, destroys radicals which are normally produced within the cells and which are toxic to biological systems. The polypeptide is Superoxide dismutase [Cu-Zn] (Drosophila orena (Fruit fly)).